The primary structure comprises 203 residues: Large ribosomal subunit protein bL25 (203 aa).

It belongs to the bacterial ribosomal protein bL25 family. CTC subfamily. As to quaternary structure, part of the 50S ribosomal subunit; part of the 5S rRNA/L5/L18/L25 subcomplex. Contacts the 5S rRNA. Binds to the 5S rRNA independently of L5 and L18.

Functionally, this is one of the proteins that binds to the 5S RNA in the ribosome where it forms part of the central protuberance. This chain is Large ribosomal subunit protein bL25, found in Cupriavidus metallidurans (strain ATCC 43123 / DSM 2839 / NBRC 102507 / CH34) (Ralstonia metallidurans).